The sequence spans 479 residues: HSPB1-associated protein 1 (479 aa).

The interval 1-25 is disordered; the sequence is MEAGCEGSSPQTLGERTMGEEGERV. Residues 88–208 form an interaction with HSPB1 region; sequence ETECSYVDAT…EDTPFLYPTR (121 aa). One can recognise a JmjC domain in the interval 124 to 288; that stretch reads WAYADYKYFV…HLARVEEAVT (165 aa). The segment at 347–412 is disordered; the sequence is PRANGEEPGV…GDSQECTSRN (66 aa). Positions 356–369 are enriched in basic and acidic residues; the sequence is VQEHMEVEQARDPS.

In terms of assembly, interacts with CRYAB and HSPB1. As to expression, widely expressed. Highly expressed by Sertoli cells in testis (at protein level).

The protein resides in the cytoplasm. In terms of biological role, may play a role in cellular stress response. In Rattus norvegicus (Rat), this protein is HSPB1-associated protein 1 (Hspbap1).